The primary structure comprises 540 residues: 2-isopropylmalate synthase (540 aa).

One can recognise a Pyruvate carboxyltransferase domain in the interval 8–271; sequence VLIFDTTLRD…NPFFGREEDS (264 aa). Mn(2+) contacts are provided by Asp-17, His-208, His-210, and Asn-244. The interval 408–540 is regulatory domain; the sequence is QLKLVQVSCG…PVVLESRPTL (133 aa).

The protein belongs to the alpha-IPM synthase/homocitrate synthase family. LeuA type 1 subfamily. In terms of assembly, homodimer. Mn(2+) is required as a cofactor.

The protein resides in the cytoplasm. The enzyme catalyses 3-methyl-2-oxobutanoate + acetyl-CoA + H2O = (2S)-2-isopropylmalate + CoA + H(+). It functions in the pathway amino-acid biosynthesis; L-leucine biosynthesis; L-leucine from 3-methyl-2-oxobutanoate: step 1/4. In terms of biological role, catalyzes the condensation of the acetyl group of acetyl-CoA with 3-methyl-2-oxobutanoate (2-ketoisovalerate) to form 3-carboxy-3-hydroxy-4-methylpentanoate (2-isopropylmalate). The polypeptide is 2-isopropylmalate synthase (Synechococcus sp. (strain CC9605)).